The following is a 232-amino-acid chain: 2,3,4,5-tetrahydropyridine-2,6-dicarboxylate N-acetyltransferase (232 aa).

Belongs to the transferase hexapeptide repeat family. DapH subfamily.

The catalysed reaction is (S)-2,3,4,5-tetrahydrodipicolinate + acetyl-CoA + H2O = L-2-acetamido-6-oxoheptanedioate + CoA. It participates in amino-acid biosynthesis; L-lysine biosynthesis via DAP pathway; LL-2,6-diaminopimelate from (S)-tetrahydrodipicolinate (acetylase route): step 1/3. Functionally, catalyzes the transfer of an acetyl group from acetyl-CoA to tetrahydrodipicolinate. The polypeptide is 2,3,4,5-tetrahydropyridine-2,6-dicarboxylate N-acetyltransferase (Streptococcus pneumoniae serotype 4 (strain ATCC BAA-334 / TIGR4)).